Reading from the N-terminus, the 419-residue chain is Odorant receptor 56a (419 aa).

The Cytoplasmic portion of the chain corresponds to 1–41 (MFKVKDLLLSPTTFEDPIFGTHLRYFQWYGYVASKDQNRPL). Residues 42–62 (LSLIRCTILTASIWLSCALML) form a helical membrane-spanning segment. At 63-76 (ARVFRGYENLNDGA) the chain is on the extracellular side. The helical transmembrane segment at 77-97 (TSYATAVQYFAVSIAMFNAYV) threads the bilayer. Residues 98 to 137 (QRDKVISLLRVAHSDIQNLMHEADNREMELLVATQAYTRT) are Cytoplasmic-facing. The helical transmembrane segment at 138 to 158 (ITLLIWIPSVIAGLMAYSDCI) threads the bilayer. At 159–196 (YRSLFLPKSVFNVPAVRRGEEHPILLFQLFPFGELCDN) the chain is on the extracellular side. The helical transmembrane segment at 197 to 217 (FVVGYLGPWYALGLGITAIPL) threads the bilayer. The Cytoplasmic segment spans residues 218–292 (WHTFITCLMK…FVQELQYLIC (75 aa)). The helical transmembrane segment at 293 to 313 (VPVMADFIIFSVLICFLFFAL) threads the bilayer. Residues 314–323 (TVGVPSKMDY) lie on the Extracellular side of the membrane. The chain crosses the membrane as a helical span at residues 324-344 (FFMFIYLFVMAGILWIYHWHA). The Cytoplasmic portion of the chain corresponds to 345–389 (TLIVECHDELSLAYFSCGWYNFEMPLQKMLVFMMMHAQRPMKMRA). The chain crosses the membrane as a helical span at residues 390 to 410 (LLVDLNLRTFIDIGRGAYSYF). Residues 411-419 (NLLRSSHLY) are Extracellular-facing.

It belongs to the insect chemoreceptor superfamily. Heteromeric odorant receptor channel (TC 1.A.69) family. Or30a subfamily. As to quaternary structure, interacts with Orco. Complexes exist early in the endomembrane system in olfactory sensory neurons (OSNs), coupling these complexes to the conserved ciliary trafficking pathway. In terms of tissue distribution, expressed in olfactory sensory neurons in the antenna.

It is found in the cell membrane. Functionally, odorant receptor which mediates acceptance or avoidance behavior, depending on its substrates. The odorant receptor repertoire encodes a large collection of odor stimuli that vary widely in identity, intensity, and duration. May form a complex with Orco to form odorant-sensing units, providing sensitive and prolonged odorant signaling and calcium permeability. Specific receptor for geosmin, a microbial odorant that constitutes an ecologically relevant stimulus that alerts flies to the presence of harmful microbes and induces avoidance behavior. In Drosophila melanogaster (Fruit fly), this protein is Odorant receptor 56a (Or56a).